We begin with the raw amino-acid sequence, 199 residues long: Recombination protein RecR (199 aa).

A C4-type zinc finger spans residues 58-73 (CVNCGNIGTGDLCEIC). Residues 81 to 176 (GEICVVEDVA…TLSSLAQGVP (96 aa)) form the Toprim domain.

It belongs to the RecR family.

In terms of biological role, may play a role in DNA repair. It seems to be involved in an RecBC-independent recombinational process of DNA repair. It may act with RecF and RecO. The chain is Recombination protein RecR from Jannaschia sp. (strain CCS1).